The chain runs to 464 residues: Adenosylhomocysteinase (464 aa).

Residues threonine 56, aspartate 131, and glutamate 190 each coordinate substrate. Residue 191-193 (TTT) participates in NAD(+) binding. Residues lysine 220 and aspartate 224 each coordinate substrate. NAD(+)-binding positions include asparagine 225, 254-259 (GFGDVG), glutamate 277, asparagine 312, 333-335 (IGH), and asparagine 378.

The protein belongs to the adenosylhomocysteinase family. Requires NAD(+) as cofactor.

Its subcellular location is the cytoplasm. It catalyses the reaction S-adenosyl-L-homocysteine + H2O = L-homocysteine + adenosine. It participates in amino-acid biosynthesis; L-homocysteine biosynthesis; L-homocysteine from S-adenosyl-L-homocysteine: step 1/1. In terms of biological role, may play a key role in the regulation of the intracellular concentration of adenosylhomocysteine. The protein is Adenosylhomocysteinase of Zymomonas mobilis subsp. mobilis (strain ATCC 31821 / ZM4 / CP4).